We begin with the raw amino-acid sequence, 194 residues long: ATP-dependent Clp protease proteolytic subunit (194 aa).

Serine 98 functions as the Nucleophile in the catalytic mechanism. The active site involves histidine 123.

The protein belongs to the peptidase S14 family. As to quaternary structure, fourteen ClpP subunits assemble into 2 heptameric rings which stack back to back to give a disk-like structure with a central cavity, resembling the structure of eukaryotic proteasomes.

It is found in the cytoplasm. It carries out the reaction Hydrolysis of proteins to small peptides in the presence of ATP and magnesium. alpha-casein is the usual test substrate. In the absence of ATP, only oligopeptides shorter than five residues are hydrolyzed (such as succinyl-Leu-Tyr-|-NHMec, and Leu-Tyr-Leu-|-Tyr-Trp, in which cleavage of the -Tyr-|-Leu- and -Tyr-|-Trp bonds also occurs).. Cleaves peptides in various proteins in a process that requires ATP hydrolysis. Has a chymotrypsin-like activity. Plays a major role in the degradation of misfolded proteins. This chain is ATP-dependent Clp protease proteolytic subunit, found in Clostridium kluyveri (strain NBRC 12016).